The chain runs to 312 residues: MAGITSSTVGFNAVFTGITKTVSSHSLFSVDSKLCSLRLSKTELSFTNLTPSPRRAFAVTCRFGGGGGGYRFSGDNRRGRPKEAEIDEALDISSIRSATVRLIDGQQNMLGLVSKDEAVRMADDAELDLVILSPDADPPVVKMMDYSKYRYEQQKRKKDQQKKTTRMDLKELKMGYNIDQHDYSVRLRAAQKFLQDGDKVKVIVSMKGRENEFRNIAIELLRRFQTEIGELATEESKNFRDRNMFIILVPNKEMIRKPQEPPTRKKKKTAENEASASAAEITAEPEPEPEPEPEPEPEPEPEPEPEPLQIDS.

A chloroplast-targeting transit peptide spans 1-55; the sequence is MAGITSSTVGFNAVFTGITKTVSSHSLFSVDSKLCSLRLSKTELSFTNLTPSPRR. Residues 253 to 263 show a composition bias toward basic and acidic residues; it reads EMIRKPQEPPT. A disordered region spans residues 253–312; that stretch reads EMIRKPQEPPTRKKKKTAENEASASAAEITAEPEPEPEPEPEPEPEPEPEPEPEPLQIDS. Residues 272–282 show a composition bias toward low complexity; sequence NEASASAAEIT. The segment covering 283 to 305 has biased composition (acidic residues); it reads AEPEPEPEPEPEPEPEPEPEPEP.

The protein belongs to the IF-3 family. In terms of assembly, monomer. Highly expressed in young, newly emerged leaves.

Its subcellular location is the plastid. It is found in the chloroplast. Its function is as follows. Chloroplast translation initiation factor that is essential for the coordination of leaf and chloroplast development. IF-3 binds to the 30S ribosomal subunit and shifts the equilibrium between 70S ribosomes and their 50S and 30S subunits in favor of the free subunits, thus enhancing the availability of 30S subunits on which protein synthesis initiation begins. This is Translation initiation factor IF3-2, chloroplastic from Arabidopsis thaliana (Mouse-ear cress).